The following is a 200-amino-acid chain: Intraflagellar transport protein 43 homolog (200 aa).

Disordered stretches follow at residues 56-76 and 175-200; these read KTGK…IAAP and ERID…SSKY. The span at 175–192 shows a compositional bias: basic and acidic residues; it reads ERIDAKDQPSDSRSRNAR.

Belongs to the IFT43 family. In terms of assembly, component of the IFT complex A (IFT-A) composed of at least che-11, daf-10, dyf-2, ift-139, ift-43 and ifta-1. Expressed in ciliated sensory neurons.

The protein resides in the cell projection. Its subcellular location is the cilium. Functionally, as a component of IFT complex A (IFT-A), a complex required for retrograde ciliary transport and entry into cilia of G protein-coupled receptors (GPCRs), it is involved in ciliogenesis. In particular, may act redundantly with the intraflagellar transport protein ift-139 to regulate the transport of specific ciliary cargo proteins such as che-3 which are related to motility. This Caenorhabditis elegans protein is Intraflagellar transport protein 43 homolog.